The sequence spans 92 residues: Large ribosomal subunit protein eL43 (92 aa).

Zn(2+) is bound by residues Cys39, Cys42, Cys57, and Cys60. A C4-type zinc finger spans residues 39-60 (CPNCGEDRVDRQGTGIWQCSYC).

This sequence belongs to the eukaryotic ribosomal protein eL43 family. Putative zinc-binding subfamily. As to quaternary structure, part of the 50S ribosomal subunit. Contacts protein L2. It depends on Zn(2+) as a cofactor.

In terms of biological role, binds to the 23S rRNA. The polypeptide is Large ribosomal subunit protein eL43 (Haloarcula marismortui (strain ATCC 43049 / DSM 3752 / JCM 8966 / VKM B-1809) (Halobacterium marismortui)).